A 65-amino-acid polypeptide reads, in one-letter code: Large ribosomal subunit protein uL29 (65 aa).

The protein belongs to the universal ribosomal protein uL29 family.

In Hyphomonas neptunium (strain ATCC 15444), this protein is Large ribosomal subunit protein uL29.